The primary structure comprises 342 residues: Nuclear distribution protein nudE homolog 1 (342 aa).

A coiled-coil region spans residues 45–189; sequence REYEAELETQ…ELAVQQKQEK (145 aa). The tract at residues 89 to 157 is interaction with PAFAH1B1; it reads EWYRQVSALE…ERNAFLESEL (69 aa). Disordered regions lie at residues 182–203 and 320–342; these read AVQQKQEKPKTPMRTSLETERT and GTRPSSTPGPMSHPSQSVVKMLL. Over residues 322 to 342 the composition is skewed to polar residues; it reads RPSSTPGPMSHPSQSVVKMLL.

Belongs to the nudE family. In terms of assembly, self-associates. Interacts with PAFAH1B1. Post-translationally, phosphorylated in mitosis.

It is found in the cytoplasm. The protein localises to the cytoskeleton. It localises to the microtubule organizing center. The protein resides in the centrosome. Its subcellular location is the spindle. It is found in the chromosome. The protein localises to the centromere. It localises to the kinetochore. The protein resides in the cleavage furrow. Its subcellular location is the cytoplasmic vesicle membrane. Functionally, required for centrosome duplication and formation and function of the mitotic spindle. This chain is Nuclear distribution protein nudE homolog 1 (NDE1), found in Gallus gallus (Chicken).